We begin with the raw amino-acid sequence, 475 residues long: NADH-quinone oxidoreductase subunit N (475 aa).

The next 14 membrane-spanning stretches (helical) occupy residues 5–25, 32–52, 71–91, 99–119, 121–141, 155–175, 193–213, 232–252, 266–286, 294–314, 322–342, 366–386, 389–409, and 439–459; these read LALPEIVLALCGLAILVFGVV, FLSCSMLTIGAFVLTGFLVVM, FMKILSLAGGAFATMLTVGYA, FEFPVLLLFSTLGAMMMASSE, LMTLFIGLELSSLAIYILCAF, YFVLGSLASGLLLYGSSLVYG, STAVPMGLMFGIVFMLAGLTF, PTSVTAYMAGAPKFAAFALLL, WQILVEGVSMLSMLFGSLAAI, LMAYSSIGHMGYALMGLCAGT, LVYLTTYLLMNVGAFAVIIAM, ATAMAIFMFSMAGAPPLAGFF, MMVFYAAINAHLFGLAAIGVV, and LSLSFVSVGMGIATTGFLLVL.

It belongs to the complex I subunit 2 family. As to quaternary structure, NDH-1 is composed of 14 different subunits. Subunits NuoA, H, J, K, L, M, N constitute the membrane sector of the complex.

It is found in the cell inner membrane. The enzyme catalyses a quinone + NADH + 5 H(+)(in) = a quinol + NAD(+) + 4 H(+)(out). NDH-1 shuttles electrons from NADH, via FMN and iron-sulfur (Fe-S) centers, to quinones in the respiratory chain. The immediate electron acceptor for the enzyme in this species is believed to be ubiquinone. Couples the redox reaction to proton translocation (for every two electrons transferred, four hydrogen ions are translocated across the cytoplasmic membrane), and thus conserves the redox energy in a proton gradient. This chain is NADH-quinone oxidoreductase subunit N, found in Gluconacetobacter diazotrophicus (strain ATCC 49037 / DSM 5601 / CCUG 37298 / CIP 103539 / LMG 7603 / PAl5).